The following is a 93-amino-acid chain: Small ribosomal subunit protein uS19 (93 aa).

It belongs to the universal ribosomal protein uS19 family.

Its function is as follows. Protein S19 forms a complex with S13 that binds strongly to the 16S ribosomal RNA. The polypeptide is Small ribosomal subunit protein uS19 (Clostridium acetobutylicum (strain ATCC 824 / DSM 792 / JCM 1419 / IAM 19013 / LMG 5710 / NBRC 13948 / NRRL B-527 / VKM B-1787 / 2291 / W)).